We begin with the raw amino-acid sequence, 359 residues long: DNA integrity scanning protein DisA (359 aa).

Residues 7-146 (DDIFRATLAA…GRRYVLDGSA (140 aa)) form the DAC domain. ATP is bound by residues Gly-74, Leu-92, and 105–109 (TRHRT).

It belongs to the DisA family. As to quaternary structure, homooctamer. The cofactor is Mg(2+).

It catalyses the reaction 2 ATP = 3',3'-c-di-AMP + 2 diphosphate. Its function is as follows. Participates in a DNA-damage check-point that is active prior to asymmetric division when DNA is damaged. DisA forms globular foci that rapidly scan along the chromosomes during sporulation, searching for lesions. When a lesion is present, DisA pauses at the lesion site. This triggers a cellular response that culminates in a temporary block in sporulation initiation. Functionally, also has diadenylate cyclase activity, catalyzing the condensation of 2 ATP molecules into cyclic di-AMP (c-di-AMP). c-di-AMP acts as a signaling molecule that couples DNA integrity with progression of sporulation. The rise in c-di-AMP level generated by DisA while scanning the chromosome, operates as a positive signal that advances sporulation; upon encountering a lesion, the DisA focus arrests at the damaged site and halts c-di-AMP synthesis. The chain is DNA integrity scanning protein DisA from Frankia casuarinae (strain DSM 45818 / CECT 9043 / HFP020203 / CcI3).